Reading from the N-terminus, the 201-residue chain is Recombination protein RecR (201 aa).

The segment at 57 to 72 adopts a C4-type zinc-finger fold; sequence CADCRTFTEQEVCNIC. The Toprim domain maps to 81–176; the sequence is GQICVVESPA…EASRIAHGVP (96 aa).

It belongs to the RecR family.

May play a role in DNA repair. It seems to be involved in an RecBC-independent recombinational process of DNA repair. It may act with RecF and RecO. This Salmonella arizonae (strain ATCC BAA-731 / CDC346-86 / RSK2980) protein is Recombination protein RecR.